A 410-amino-acid polypeptide reads, in one-letter code: Bifunctional malic/malolactic enzyme (410 aa).

Tyr-36 functions as the Proton donor in the catalytic mechanism. Catalysis depends on Lys-91, which acts as the Proton acceptor. 3 residues coordinate a divalent metal cation: Glu-133, Asp-134, and Asp-159. NADP(+) contacts are provided by residues 192–195 (AGAA), Asn-286, and Asn-317.

This sequence belongs to the malic enzymes family. As to quaternary structure, interacts with BrxC. Mg(2+) is required as a cofactor. Mn(2+) serves as cofactor.

The enzyme catalyses (S)-malate + NADP(+) = pyruvate + CO2 + NADPH. It carries out the reaction oxaloacetate + H(+) = pyruvate + CO2. The catalysed reaction is (S)-malate + H(+) = (S)-lactate + CO2. With respect to regulation, NADPH is a strong modulator that switches activity from a pyruvate-producing malic enzyme to a lactate-generating malolactic enzyme. Bifunctional enzyme with both malic and malolactic enzyme activities. In the absence of NADPH, catalyzes the reversible decarboxylation of malate to pyruvate. Can use NAD and NADP, but with a very strong preference for NADP. In the presence of excess NADPH, catalyzes the non-oxidative decarboxylation of malate to lactate. During growth on glucose, contributes to NADPH balancing via oxidation of the NADPH produced in excess by other enzymatic reactions. Can also catalyze the decarboxylation of oxaloacetate. This chain is Bifunctional malic/malolactic enzyme (ytsJ), found in Bacillus subtilis (strain 168).